The chain runs to 471 residues: MNFLEIKGLRVFYPESSYSLNVDSLEVKEGETILIAGKSGSGKSTLLNSINGVIPHEIEVEEEGEVKVFGINVRNSTIQQIARFVGTLLQDPDSQIFNYYVIEELAFGAENLNIPREEILYRINKVSQIVGISHLLNKETFRLSGGEKQRVVLGSILIMNPKALILDEPTSSIDLKGTKEILTTLRGLKEKMSMIIAEHKINKVLEFVDRIIILDKGKIIYDIKRDHVKEVDFEDLGLEPLRPSPLPKKRRDGEVILEAKVKVTDGNRTIVDTEIVLRKGISALIGDNGSGKSTLLKALAGILPINLKFYGSIKVEGKEISKLPVEKRGEIIAYLPQEIDLMFTKKTVKEEVSYPAKVRKKYDERVIKELLKRFNLPEDRDPFLLSVGQKRRVAISSLLATGVKVFLLDEPTTGQDWYNRKMLGEELRSIDATFLVVTHDPLFVYYYADRVYKMVNGRVIPISPEDVIKDW.

ABC transporter domains are found at residues 4 to 241 (LEIK…LEPL) and 255 to 470 (VILE…VIKD). ATP-binding positions include 37 to 44 (GKSGSGKS) and 286 to 293 (GDNGSGKS).

Belongs to the ABC transporter superfamily.

It is found in the cell membrane. Probably part of an ABC transporter complex. Responsible for energy coupling to the transport system. This is Putative ABC transporter ATP-binding protein STK_11360 from Sulfurisphaera tokodaii (strain DSM 16993 / JCM 10545 / NBRC 100140 / 7) (Sulfolobus tokodaii).